Here is a 512-residue protein sequence, read N- to C-terminus: Acid-sensing ion channel 2 (512 aa).

The Cytoplasmic portion of the chain corresponds to 1 to 37 (MDLKESPSEGSLQPSSIQIFANTSTLHGIRHIFVYGP). Phosphoserine is present on residues serine 8 and serine 11. A helical transmembrane segment spans residues 38–58 (LTIRRVLWAVAFVGSLGLLLV). Residues 59-427 (ESSERVSYYF…EQKKAYEVAA (369 aa)) lie on the Extracellular side of the membrane. 6 disulfides stabilise this stretch: cysteine 92/cysteine 193, cysteine 289/cysteine 364, cysteine 307/cysteine 360, cysteine 311/cysteine 358, cysteine 320/cysteine 342, and cysteine 322/cysteine 334. Asparagine 365 and asparagine 392 each carry an N-linked (GlcNAc...) asparagine glycan. The helical transmembrane segment at 428–448 (LLGDIGGQMGLFIGASILTIL) threads the bilayer. The GAS motif; ion selectivity filter motif lies at 441-443 (GAS). Over 449 to 512 (ELFDYIYELI…ALGTLEEIAC (64 aa)) the chain is Cytoplasmic.

It belongs to the amiloride-sensitive sodium channel (TC 1.A.6) family. ASIC2 subfamily. Can form homotrimers. Heterotrimer; forms functional heterotrimers producing channel with different properties. Forms heterotrimers with ASIC1; while ASIC1 determines current amplitude, ASIC2 influences the properties of the current. Forms heterotrimers with ASIC3; resulting in channels with distinct properties. Interacts with STOM; STOM regulates the gating of ASIC2-containing channels. Interacts with PICK1; promotes ASIC3 phosphorylation by PKC and activation of ASIC2/ASIC3 heterotrimers. As to expression, expressed by sensory neurons. Expressed by nociceptive sensory neurons, spiral ganglion (SG) neurons and the retina (at protein level). Expressed in outer nuclear layer of retina (photoreceptors) and to a lower extent in distal and proximal inner nuclear layer.

Its subcellular location is the cell membrane. The catalysed reaction is Na(+)(in) = Na(+)(out). It carries out the reaction K(+)(in) = K(+)(out). The enzyme catalyses Li(+)(in) = Li(+)(out). Inhibited by the diuretic drug amiloride. Its function is as follows. Forms pH-gated trimeric sodium channels that act as postsynaptic excitatory sensors in the nervous system. Upon extracellular acidification, these channels generate rapid, transient inward currents that fully desensitize. Highly selective for sodium, they are permeable to other cations. By forming heterotrimeric channels with ASIC1, could contribute to synaptic plasticity, learning, and memory. Additionally, as acid sensors at nerve terminals, plays a role in mechanosensation and phototransduction. Functionally, has no pH-gated sodium channel activity per se but can associate with other ASICs to produce functional channels with specific properties. The sequence is that of Acid-sensing ion channel 2 from Mus musculus (Mouse).